The primary structure comprises 347 residues: GMP reductase (347 aa).

108 to 131 (ADFEKTKQILDLNPALNFVCIDVA) lines the NADP(+) pocket. Glycine 181 and glycine 183 together coordinate K(+). Cysteine 186 (thioimidate intermediate) is an active-site residue. 216–239 (IVSDGGCTTPGDVAKAFGGGADFV) serves as a coordination point for NADP(+).

This sequence belongs to the IMPDH/GMPR family. GuaC type 1 subfamily. In terms of assembly, homotetramer.

The catalysed reaction is IMP + NH4(+) + NADP(+) = GMP + NADPH + 2 H(+). In terms of biological role, catalyzes the irreversible NADPH-dependent deamination of GMP to IMP. It functions in the conversion of nucleobase, nucleoside and nucleotide derivatives of G to A nucleotides, and in maintaining the intracellular balance of A and G nucleotides. The sequence is that of GMP reductase from Escherichia coli (strain SMS-3-5 / SECEC).